A 174-amino-acid polypeptide reads, in one-letter code: Large ribosomal subunit protein uL18 (174 aa).

The protein belongs to the universal ribosomal protein uL18 family. In terms of assembly, part of the 50S ribosomal subunit. Contacts the 5S and 23S rRNAs.

Functionally, this is one of the proteins that bind and probably mediate the attachment of the 5S RNA into the large ribosomal subunit, where it forms part of the central protuberance. In Methanocorpusculum labreanum (strain ATCC 43576 / DSM 4855 / Z), this protein is Large ribosomal subunit protein uL18.